The following is a 682-amino-acid chain: Penicillin-binding protein activator LpoA (682 aa).

Residues 1–26 (MLPLNSVRTHAGRLVPVMLAALFLAG) form the signal peptide. Cys27 carries the N-palmitoyl cysteine lipid modification. Cys27 is lipidated: S-diacylglycerol cysteine. Disordered stretches follow at residues 240–262 (AKQL…TGET) and 314–341 (ANNA…VSPT). Over residues 248-262 (GGTPPAAAAPTTGET) the composition is skewed to low complexity.

This sequence belongs to the LpoA family. In terms of assembly, interacts with PBP1a.

The protein resides in the cell outer membrane. Regulator of peptidoglycan synthesis that is essential for the function of penicillin-binding protein 1A (PBP1a). In Dickeya chrysanthemi (strain Ech1591) (Dickeya zeae (strain Ech1591)), this protein is Penicillin-binding protein activator LpoA.